We begin with the raw amino-acid sequence, 140 residues long: Large ribosomal subunit protein uL16 (140 aa).

Belongs to the universal ribosomal protein uL16 family. As to quaternary structure, part of the 50S ribosomal subunit.

Binds 23S rRNA and is also seen to make contacts with the A and possibly P site tRNAs. This chain is Large ribosomal subunit protein uL16, found in Trichlorobacter lovleyi (strain ATCC BAA-1151 / DSM 17278 / SZ) (Geobacter lovleyi).